The chain runs to 70 residues: Small ribosomal subunit protein bS21 (70 aa).

Belongs to the bacterial ribosomal protein bS21 family.

This is Small ribosomal subunit protein bS21 from Polaromonas naphthalenivorans (strain CJ2).